The sequence spans 552 residues: HTH-type transcriptional regulator SgrR (552 aa).

The 116-residue stretch at 1-116 folds into the HTH marR-type domain; sequence MPSGRLQQQF…LISHLGRSFR (116 aa). A DNA-binding region (H-T-H motif) is located at residues 26-49; sequence LNELADLLNCSRRHMRTLLNTMQA. Residues 163–493 are solute-binding; it reads ELEADIAHHW…RDWQDDAAQW (331 aa).

In terms of biological role, activates the small RNA gene sgrS under glucose-phosphate stress conditions as well as yfdZ. Represses its own transcription under both stress and non-stress conditions. Might act as a sensor of the intracellular accumulation of phosphoglucose by binding these molecules in its C-terminal solute-binding domain. In Salmonella typhi, this protein is HTH-type transcriptional regulator SgrR.